The primary structure comprises 302 residues: Zinc transporter ZIP1 (302 aa).

Topologically, residues 1–6 are extracellular; it reads MDYLLQ. A helical membrane pass occupies residues 7–27; that stretch reads VKVGALVGLLLLTLFFGFIPA. At 28–44 the chain is on the cytoplasmic side; that stretch reads RMKWFHVTGGTELHKAV. A helical membrane pass occupies residues 45 to 65; it reads LSFVSCFAGGVFLSACLLDII. At 66 to 86 the chain is on the extracellular side; sequence PDYLSDIHGELQKRDLDDGFP. The chain crosses the membrane as a helical span at residues 87–107; it reads LPEFIMACGFFTVLILEKMVL. The Cytoplasmic portion of the chain corresponds to 108–158; sequence SCTEGHRNEETAPLLAPAAPNGHAHGHPSVNDLEGSGHHVHVDFHAHSSFR. Residues 159–179 traverse the membrane as a helical segment; it reads SFMLFLSLSLHSVFEGLAIGL. At 180–185 the chain is on the extracellular side; that stretch reads QTTNAK. Residues 186–206 traverse the membrane as a helical segment; the sequence is VLEICIAILVHKSIIVFSLSV. The Cytoplasmic portion of the chain corresponds to 207 to 219; that stretch reads KLVQSAVKPLWVV. The chain crosses the membrane as a helical span at residues 220–240; sequence LYVTVFAIMSPLGIGIGIVVI. Over 241 to 247 the chain is Extracellular; that stretch reads ETERQAG. A helical membrane pass occupies residues 248-268; that stretch reads GLIQAVLEGLAAGTFIYITFL. Residues 269–281 lie on the Cytoplasmic side of the membrane; that stretch reads EILPHELNSSERP. Residues 282 to 302 form a helical membrane-spanning segment; sequence LLKVLFLLCGFSIMAALCFLG.

The protein belongs to the ZIP transporter (TC 2.A.5) family. Ubiquitous. Highest levels in ovary, high levels in heart, eye, kidney and brain, moderate levels in intestine and low levels in gill and skin.

It is found in the cell membrane. The protein localises to the endoplasmic reticulum membrane. It carries out the reaction Zn(2+)(in) = Zn(2+)(out). Its function is as follows. Transporter for the divalent cation Zn(2+). Mediates the influx of Zn(2+) into cells from extracellular space. This chain is Zinc transporter ZIP1 (slc39a1), found in Danio rerio (Zebrafish).